A 199-amino-acid chain; its full sequence is Putative lectin L633 (199 aa).

Positions 1 to 25 (MNILLLLMLLTSIILLVILIFLAYN) are cleaved as a signal peptide. Residues 35–48 (CITPAPESQSISPD) show a composition bias toward polar residues. A disordered region spans residues 35–74 (CITPAPESQSISPDQTTQLQTTTPVTSTPSNPTPTTIIPN). Low complexity predominate over residues 49–73 (QTTQLQTTTPVTSTPSNPTPTTIIP). Residues 84 to 195 (EIVSNGDNVL…LGQELWCATR (112 aa)) form the Bulb-type lectin domain. N-linked (GlcNAc...) asparagine; by host glycosylation occurs at Asn-121.

The protein localises to the secreted. The protein is Putative lectin L633 of Acanthamoeba polyphaga (Amoeba).